Consider the following 536-residue polypeptide: Phosphoenolpyruvate carboxykinase (ATP) (536 aa).

Residues arginine 61, tyrosine 195, and lysine 201 each coordinate substrate. ATP contacts are provided by residues lysine 201, histidine 220, and 236–244 (GLSGTGKTT). Mn(2+)-binding residues include lysine 201 and histidine 220. Position 257 (aspartate 257) interacts with Mn(2+). ATP-binding residues include glutamate 285, arginine 322, and threonine 447. Arginine 322 is a binding site for substrate.

The protein belongs to the phosphoenolpyruvate carboxykinase (ATP) family. Requires Mn(2+) as cofactor.

The protein localises to the cytoplasm. It catalyses the reaction oxaloacetate + ATP = phosphoenolpyruvate + ADP + CO2. It participates in carbohydrate biosynthesis; gluconeogenesis. Involved in the gluconeogenesis. Catalyzes the conversion of oxaloacetate (OAA) to phosphoenolpyruvate (PEP) through direct phosphoryl transfer between the nucleoside triphosphate and OAA. This is Phosphoenolpyruvate carboxykinase (ATP) from Sinorhizobium fredii (strain NBRC 101917 / NGR234).